We begin with the raw amino-acid sequence, 451 residues long: MGKYFGTDGVRGVANQELTPELAFKLGRYGGYVLAHNKGEKHPRVLVGRDTRVSGEMLESALIAGLISIGAEVMRLGIISTPGVAYLTRDMGAELGVMISASHNPVADNGIKFFGSDGFKLSDEQENEIEALLDQENPELPRPVGNDIVHYSDYFEGAQKYLSYLKSTVDVNFEGLKIVLDGANGSTSSLAPFLFGDLEADTETIGCSPDGYNINEKCGSTHPEKLAEKVVETESDFGLAFDGDGDRIIAVDENGQIVDGDQIMFIIGQEMHKNQELNNDMIVSTVMSNLGFYKALEQEGIKSNKTKVGDRYVVEEMRRGNYNLGGEQSGHIVMMDYNTTGDGLLTGIQLASVIKMTGKSLSELAGQMKKYPQSLINVRVTDKYRVEENVDVKEVMTKVEVEMNGEGRILVRPSGTEPLVRVMVEAATDEDAERFAQQIADVVQDKMGLDK.

Ser102 acts as the Phosphoserine intermediate in catalysis. Mg(2+) is bound by residues Ser102, Asp242, Asp244, and Asp246. Ser102 bears the Phosphoserine mark.

Belongs to the phosphohexose mutase family. Mg(2+) serves as cofactor. Post-translationally, activated by phosphorylation.

The catalysed reaction is alpha-D-glucosamine 1-phosphate = D-glucosamine 6-phosphate. In terms of biological role, catalyzes the conversion of glucosamine-6-phosphate to glucosamine-1-phosphate. The chain is Phosphoglucosamine mutase from Staphylococcus aureus (strain Mu3 / ATCC 700698).